A 904-amino-acid chain; its full sequence is NADH-quinone oxidoreductase subunit G (904 aa).

Positions 1–83 (MATIHVDGKA…GTWISIDDEE (83 aa)) constitute a 2Fe-2S ferredoxin-type domain. Cys34, Cys45, Cys48, and Cys67 together coordinate [2Fe-2S] cluster. Residues 83-122 (ESKAFRASVVEWLMTNHPHDCPVCEEGGHCHLQDMTVMTG) enclose the 4Fe-4S His(Cys)3-ligated-type domain. [4Fe-4S] cluster contacts are provided by His99, Cys103, Cys106, Cys112, Cys151, Cys154, Cys157, Cys201, Cys228, Cys231, Cys235, and Cys263. The 4Fe-4S Mo/W bis-MGD-type domain occupies 221-277 (MQFAPSICHGCSSGCNISPGERYGELRRIENRFNGSVNQYFLCDRGRFGYGYVNRKD).

The protein belongs to the complex I 75 kDa subunit family. In terms of assembly, composed of 13 different subunits. Subunits NuoCD, E, F, and G constitute the peripheral sector of the complex. The cofactor is [2Fe-2S] cluster. Requires [4Fe-4S] cluster as cofactor.

The catalysed reaction is a quinone + NADH + 5 H(+)(in) = a quinol + NAD(+) + 4 H(+)(out). NDH-1 shuttles electrons from NADH, via FMN and iron-sulfur (Fe-S) centers, to quinones in the respiratory chain. The immediate electron acceptor for the enzyme in this species is believed to be ubiquinone. Couples the redox reaction to proton translocation (for every two electrons transferred, four hydrogen ions are translocated across the cytoplasmic membrane), and thus conserves the redox energy in a proton gradient. The protein is NADH-quinone oxidoreductase subunit G (nuoG) of Pseudomonas putida (strain ATCC 47054 / DSM 6125 / CFBP 8728 / NCIMB 11950 / KT2440).